The chain runs to 193 residues: 7-methyl-GTP pyrophosphatase (193 aa).

Catalysis depends on Asp68, which acts as the Proton acceptor.

This sequence belongs to the Maf family. YceF subfamily. A divalent metal cation is required as a cofactor.

The protein resides in the cytoplasm. The catalysed reaction is N(7)-methyl-GTP + H2O = N(7)-methyl-GMP + diphosphate + H(+). In terms of biological role, nucleoside triphosphate pyrophosphatase that hydrolyzes 7-methyl-GTP (m(7)GTP). May have a dual role in cell division arrest and in preventing the incorporation of modified nucleotides into cellular nucleic acids. The polypeptide is 7-methyl-GTP pyrophosphatase (Chromobacterium violaceum (strain ATCC 12472 / DSM 30191 / JCM 1249 / CCUG 213 / NBRC 12614 / NCIMB 9131 / NCTC 9757 / MK)).